A 93-amino-acid polypeptide reads, in one-letter code: HssA/B-like protein 26 (93 aa).

This sequence belongs to the hssA/B family.

The polypeptide is HssA/B-like protein 26 (hssl26) (Dictyostelium discoideum (Social amoeba)).